The sequence spans 498 residues: Glycerol kinase (498 aa).

T11 lines the ADP pocket. Residues T11, T12, and S13 each contribute to the ATP site. Residue T11 participates in sn-glycerol 3-phosphate binding. An ADP-binding site is contributed by R15. 4 residues coordinate sn-glycerol 3-phosphate: R81, E82, Y133, and D242. 5 residues coordinate glycerol: R81, E82, Y133, D242, and Q243. ADP is bound by residues T264 and G307. ATP contacts are provided by T264, G307, Q311, and G411. Residue G411 participates in ADP binding.

It belongs to the FGGY kinase family.

It catalyses the reaction glycerol + ATP = sn-glycerol 3-phosphate + ADP + H(+). Its pathway is polyol metabolism; glycerol degradation via glycerol kinase pathway; sn-glycerol 3-phosphate from glycerol: step 1/1. Its activity is regulated as follows. Inhibited by fructose 1,6-bisphosphate (FBP). Key enzyme in the regulation of glycerol uptake and metabolism. Catalyzes the phosphorylation of glycerol to yield sn-glycerol 3-phosphate. The chain is Glycerol kinase from Afipia carboxidovorans (strain ATCC 49405 / DSM 1227 / KCTC 32145 / OM5) (Oligotropha carboxidovorans).